Reading from the N-terminus, the 370-residue chain is 4-hydroxy-3-methylbut-2-en-1-yl diphosphate synthase (flavodoxin) (370 aa).

Positions 270, 273, 305, and 312 each coordinate [4Fe-4S] cluster.

Belongs to the IspG family. Requires [4Fe-4S] cluster as cofactor.

It carries out the reaction (2E)-4-hydroxy-3-methylbut-2-enyl diphosphate + oxidized [flavodoxin] + H2O + 2 H(+) = 2-C-methyl-D-erythritol 2,4-cyclic diphosphate + reduced [flavodoxin]. Its pathway is isoprenoid biosynthesis; isopentenyl diphosphate biosynthesis via DXP pathway; isopentenyl diphosphate from 1-deoxy-D-xylulose 5-phosphate: step 5/6. Functionally, converts 2C-methyl-D-erythritol 2,4-cyclodiphosphate (ME-2,4cPP) into 1-hydroxy-2-methyl-2-(E)-butenyl 4-diphosphate. The chain is 4-hydroxy-3-methylbut-2-en-1-yl diphosphate synthase (flavodoxin) from Ectopseudomonas mendocina (strain ymp) (Pseudomonas mendocina).